Here is a 130-residue protein sequence, read N- to C-terminus: Follitropin subunit beta (130 aa).

Positions 1-20 (MMKSIQLCILLWCLRAVCCH) are cleaved as a signal peptide. 6 disulfides stabilise this stretch: cysteine 22–cysteine 70, cysteine 36–cysteine 85, cysteine 39–cysteine 123, cysteine 47–cysteine 101, cysteine 51–cysteine 103, and cysteine 106–cysteine 113. N-linked (GlcNAc...) asparagine glycans are attached at residues asparagine 26 and asparagine 43.

The protein belongs to the glycoprotein hormones subunit beta family. As to quaternary structure, heterodimer. The active follitropin is a heterodimer composed of an alpha chain/CGA shared with other hormones and a unique beta chain/FSHB shown here.

It localises to the secreted. Functionally, together with the alpha chain CGA constitutes follitropin, the follicle-stimulating hormone, and provides its biological specificity to the hormone heterodimer. Binds FSHR, a G protein-coupled receptor, on target cells to activate downstream signaling pathways. Follitropin is involved in follicle development and spermatogenesis in reproductive organs. The polypeptide is Follitropin subunit beta (Fshb) (Rattus norvegicus (Rat)).